The sequence spans 246 residues: Peroxisomal membrane protein 11A (246 aa).

At 1 to 93 the chain is on the cytoplasmic side; the sequence is MDAFIRVANQ…LCLTLANLNR (93 aa). The chain crosses the membrane as a helical span at residues 94–114; the sequence is VVYYICDTVLWAKSVGLTSGV. Over 115–217 the chain is Lumenal; sequence NREKWQRWAA…LNQLGIYKSN (103 aa). The helical transmembrane segment at 218 to 238 threads the bilayer; that stretch reads LGVVGLGGLISSLAGLLTVVY. The tract at residues 218 to 238 is required for homodimerization, interaction with PEX11G, and peroxisomal localization; that stretch reads LGVVGLGGLISSLAGLLTVVY. The Cytoplasmic segment spans residues 239–246; that stretch reads PQLKLKAR.

The protein belongs to the peroxin-11 family. As to quaternary structure, homodimer. Heterodimer with PEX11G. Probably interacts with COPB2 and COPA. Interacts with PEX19. Interacts with FIS1. In terms of tissue distribution, strongly expressed in liver and at lower levels in heart, brain, kidney and testis.

Its subcellular location is the peroxisome membrane. Functionally, may be involved in peroxisomal proliferation and may regulate peroxisomes division. May mediate binding of coatomer proteins to the peroxisomal membrane. Promotes membrane protrusion and elongation on the peroxisomal surface. This chain is Peroxisomal membrane protein 11A (Pex11a), found in Mus musculus (Mouse).